Here is a 232-residue protein sequence, read N- to C-terminus: BTB/POZ domain-containing protein KCTD11 (232 aa).

The region spanning 1 to 49 is the BTB domain; the sequence is MLGAMFRADTLMPANLNPQGDGHYFIDRDGKAFRHILNFLRLGRLDLPR.

In terms of assembly, homopentamer. Interacts with KCTD6 and KCTD21; KCTD11 and KCTD6 or KCTD21 may associate in pentameric assemblies. Component of the BCR(KCTD11) E3 ubiquitin ligase complex, at least composed of CUL3 and KCTD11 and RBX1. Interacts (via BTB domain) with CUL3; initially a 4:4 stoichiometry has been reported, however, electron microscopy revealed pentameric states of the BTB domain. In terms of tissue distribution, weakly expressed in lung. In the cerebellum, higher expression in non proliferating external granule cells layer than in highly proliferating ones.

Its pathway is protein modification; protein ubiquitination. Plays a role as a marker and a regulator of neuronal differentiation; Up-regulated by a variety of neurogenic signals, such as retinoic acid, epidermal growth factor/EGF and NGFB/nerve growth factor. Induces apoptosis, growth arrest and the expression of cyclin-dependent kinase inhibitor CDKN1B. Plays a role as a tumor repressor and inhibits cell growth and tumorigenicity of medulloblastoma (MDB). Acts as a probable substrate-specific adapter for a BCR (BTB-CUL3-RBX1) E3 ubiquitin-protein ligase complex towards HDAC1. Functions as antagonist of the Hedgehog pathway on cell proliferation and differentiation by affecting the nuclear transfer of transcription factor GLI1, thus maintaining cerebellar granule cells in undifferentiated state, this effect probably occurs via HDAC1 down-regulation, keeping GLI1 acetylated and inactive. When knock-down, Hedgehog antagonism is impaired and proliferation of granule cells is sustained. Activates the caspase cascade. This Mus musculus (Mouse) protein is BTB/POZ domain-containing protein KCTD11 (Kctd11).